A 259-amino-acid polypeptide reads, in one-letter code: MSKHKLIILRHGEGQWNKENRFCSWVDQKLNNDGLEEARNCGRQLKALNFEFDLVFTSILNRSIHTAWLILEELGQEWVPVESSWRLNERHYGALIGLNREKMALNHGEEQVRLWRRSYNVTPPPIEESHPYFHEIYSDRRYKVCDVPLDQLPRSESLKDVLERLLPYWKERIAPEILKGKSILISAHGNSSRALLKHLEGISDEDIINITLPTGVPILLELDENLRAVGPHQFLGNQEAIQAAIKKVDDQGKVKQGKQ.

Serine 2 is modified (N-acetylserine). Residues 10–17 (RHGEGQWN), 23–24 (CS), arginine 62, 89–92 (ERHY), arginine 100, and 116–117 (RR) contribute to the substrate site. The active-site Tele-phosphohistidine intermediate is histidine 11. Glutamate 89 serves as the catalytic Proton donor/acceptor. Threonine 122 is modified (phosphothreonine). Position 189–190 (189–190 (GN)) interacts with substrate.

The protein belongs to the phosphoglycerate mutase family. BPG-dependent PGAM subfamily. In terms of assembly, homodimer. Expressed in red blood cells. Expressed in placenta (labyrinthine trophoblasts).

The catalysed reaction is (2R)-3-phospho-glyceroyl phosphate = (2R)-2,3-bisphosphoglycerate + H(+). It catalyses the reaction (2R)-2-phosphoglycerate = (2R)-3-phosphoglycerate. Its activity is regulated as follows. At alkaline pH BPGM favors the synthase reaction; however, at lower pH the phosphatase reaction is dominant. Inhibited by citrate. Its function is as follows. Plays a major role in regulating hemoglobin oxygen affinity by controlling the levels of its allosteric effector 2,3-bisphosphoglycerate (2,3-BPG). Also exhibits mutase (EC 5.4.2.11) activity. This Mus musculus (Mouse) protein is Bisphosphoglycerate mutase (Bpgm).